A 426-amino-acid chain; its full sequence is Enolase (426 aa).

Glutamine 163 lines the (2R)-2-phosphoglycerate pocket. Residue glutamate 205 is the Proton donor of the active site. 3 residues coordinate Mg(2+): aspartate 242, glutamate 285, and aspartate 312. (2R)-2-phosphoglycerate is bound by residues lysine 337, arginine 366, serine 367, and lysine 388. Lysine 337 functions as the Proton acceptor in the catalytic mechanism.

This sequence belongs to the enolase family. Requires Mg(2+) as cofactor.

The protein localises to the cytoplasm. Its subcellular location is the secreted. It localises to the cell surface. The enzyme catalyses (2R)-2-phosphoglycerate = phosphoenolpyruvate + H2O. Its pathway is carbohydrate degradation; glycolysis; pyruvate from D-glyceraldehyde 3-phosphate: step 4/5. Its function is as follows. Catalyzes the reversible conversion of 2-phosphoglycerate (2-PG) into phosphoenolpyruvate (PEP). It is essential for the degradation of carbohydrates via glycolysis. The chain is Enolase from Gluconacetobacter diazotrophicus (strain ATCC 49037 / DSM 5601 / CCUG 37298 / CIP 103539 / LMG 7603 / PAl5).